We begin with the raw amino-acid sequence, 240 residues long: Ubiquitin domain-containing protein 2 (240 aa).

The interval 1–48 (MGGCVGSHHDSSGSLNENSDGTGVALGRNQPLKREKPKWKSDYPMTDG) is disordered. The segment covering 12–21 (SGSLNENSDG) has biased composition (polar residues). Residues 32-41 (LKREKPKWKS) show a composition bias toward basic and acidic residues. One can recognise a Ubiquitin-like domain in the interval 152-227 (CQLRLRLSTG…VQVIVSQPPT (76 aa)).

It localises to the cytoplasm. The protein is Ubiquitin domain-containing protein 2 (ubtd2) of Danio rerio (Zebrafish).